The following is a 350-amino-acid chain: Leucine-rich repeat-containing protein 23 (350 aa).

A compositionally biased stretch (acidic residues) spans 1 to 54 (MEDETLEDGPEEEEEDEEEGTAEETNQDVTERDEEEEAEKDEEEDKEEEEEAEK). The interval 1 to 64 (MEDETLEDGP…EEPPPHMPLS (64 aa)) is disordered. LRR repeat units follow at residues 107 to 128 (HLRY…GALT), 129 to 150 (HLLS…GELP), 151 to 171 (YLQV…FGHP), 172 to 193 (RLET…ECSN), 196 to 216 (SLHT…LNLP), 217 to 238 (SLRE…EALV), 239 to 260 (NLTT…SEHL), and 262 to 283 (ALQY…QKLY). An LRRCT domain is found at 296–334 (NPCEEEEGYRMETLIALPQLERLDKDFFEEEEKREAAET). Residues 314–344 (QLERLDKDFFEEEEKREAAETKKAREEEMAE) are a coiled coil. The disordered stretch occupies residues 325-350 (EEEKREAAETKKAREEEMAEPGEKGN).

It is found in the cytoplasm. Its subcellular location is the cytoskeleton. It localises to the flagellum axoneme. In Xenopus tropicalis (Western clawed frog), this protein is Leucine-rich repeat-containing protein 23 (lrrc23).